The following is a 266-amino-acid chain: Luciferase (266 aa).

The helical transmembrane segment at 22-41 threads the bilayer; sequence GLAVTCCAVAVASIIAFPYI.

This sequence belongs to the fungal luciferase family.

The protein resides in the membrane. The enzyme catalyses 3-hydroxyhispidin + O2 = (E)-caffeoylpyruvate + hnu + CO2. It carries out the reaction 3-hydroxyhispidin + O2 = 4-[(E)-2-(3,4-dihydroxyphenyl)ethenyl]-1,7-dihydroxy-2,3,5-trioxabicyclo[2.2.2]oct-7-en-6-one. Functionally, luciferase; part of the gene cluster that mediates the fungal bioluminescence cycle. Uses the fungal luciferin 3-hydroxyhispidin as a substrate to produce an endoperoxide as a high-energy intermediate with decomposition that yields oxyluciferin (also known as caffeoylpyruvate) and light emission. The fungal bioluminescence cycle begins with the hispidin synthetase that catalyzes the formation of hispidin which is further hydroxylated by the hispidin-3-hydroxylase, yielding the fungal luciferin 3-hydroxyhispidin. The luciferase then produces an endoperoxide as a high-energy intermediate with decomposition that yields oxyluciferin and light emission. Oxyluciferin can be recycled to caffeic acid by caffeoylpyruvate hydrolase. This chain is Luciferase, found in Armillaria mellea (Honey mushroom).